We begin with the raw amino-acid sequence, 211 residues long: Large ribosomal subunit protein bL25 (211 aa).

Positions 188-211 are disordered; sequence HREEEKAPEETGEAAPAPTPETGQ. The segment covering 200 to 211 has biased composition (low complexity); that stretch reads EAAPAPTPETGQ.

The protein belongs to the bacterial ribosomal protein bL25 family. CTC subfamily. As to quaternary structure, part of the 50S ribosomal subunit; part of the 5S rRNA/L5/L18/L25 subcomplex. Contacts the 5S rRNA. Binds to the 5S rRNA independently of L5 and L18.

Its function is as follows. This is one of the proteins that binds to the 5S RNA in the ribosome where it forms part of the central protuberance. This chain is Large ribosomal subunit protein bL25, found in Desulforudis audaxviator (strain MP104C).